A 619-amino-acid polypeptide reads, in one-letter code: Dihydroxy-acid dehydratase (619 aa).

Residue Asp-81 participates in Mg(2+) binding. Cys-122 contacts [2Fe-2S] cluster. Positions 123 and 124 each coordinate Mg(2+). At Lys-124 the chain carries N6-carboxylysine. Position 198 (Cys-198) interacts with [2Fe-2S] cluster. Glu-494 lines the Mg(2+) pocket. Ser-520 serves as the catalytic Proton acceptor.

The protein belongs to the IlvD/Edd family. As to quaternary structure, homodimer. Requires [2Fe-2S] cluster as cofactor. Mg(2+) is required as a cofactor.

The enzyme catalyses (2R)-2,3-dihydroxy-3-methylbutanoate = 3-methyl-2-oxobutanoate + H2O. It catalyses the reaction (2R,3R)-2,3-dihydroxy-3-methylpentanoate = (S)-3-methyl-2-oxopentanoate + H2O. It participates in amino-acid biosynthesis; L-isoleucine biosynthesis; L-isoleucine from 2-oxobutanoate: step 3/4. It functions in the pathway amino-acid biosynthesis; L-valine biosynthesis; L-valine from pyruvate: step 3/4. In terms of biological role, functions in the biosynthesis of branched-chain amino acids. Catalyzes the dehydration of (2R,3R)-2,3-dihydroxy-3-methylpentanoate (2,3-dihydroxy-3-methylvalerate) into 2-oxo-3-methylpentanoate (2-oxo-3-methylvalerate) and of (2R)-2,3-dihydroxy-3-methylbutanoate (2,3-dihydroxyisovalerate) into 2-oxo-3-methylbutanoate (2-oxoisovalerate), the penultimate precursor to L-isoleucine and L-valine, respectively. The protein is Dihydroxy-acid dehydratase of Neisseria gonorrhoeae (strain ATCC 700825 / FA 1090).